We begin with the raw amino-acid sequence, 382 residues long: Lipid-A-disaccharide synthase (382 aa).

It belongs to the LpxB family.

The enzyme catalyses 2-N,3-O-bis[(3R)-3-hydroxytetradecanoyl]-alpha-D-glucosaminyl 1-phosphate + UDP-2-N,3-O-bis[(3R)-3-hydroxytetradecanoyl]-alpha-D-glucosamine = lipid A disaccharide (E. coli) + UDP + H(+). It carries out the reaction a lipid X + a UDP-2-N,3-O-bis[(3R)-3-hydroxyacyl]-alpha-D-glucosamine = a lipid A disaccharide + UDP + H(+). Its pathway is glycolipid biosynthesis; lipid IV(A) biosynthesis; lipid IV(A) from (3R)-3-hydroxytetradecanoyl-[acyl-carrier-protein] and UDP-N-acetyl-alpha-D-glucosamine: step 5/6. Its function is as follows. Condensation of UDP-2,3-diacylglucosamine and 2,3-diacylglucosamine-1-phosphate to form lipid A disaccharide, a precursor of lipid A, a phosphorylated glycolipid that anchors the lipopolysaccharide to the outer membrane of the cell. The polypeptide is Lipid-A-disaccharide synthase (Escherichia coli (strain ATCC 8739 / DSM 1576 / NBRC 3972 / NCIMB 8545 / WDCM 00012 / Crooks)).